Reading from the N-terminus, the 411-residue chain is MKEKAESGGGVGYVRADQIDLKSLDEQLQRHLSKAWTMEKRKSLSDGEDNVNNTRHNQNNFGHRQLVFQRPLLGGGYSNNNNSSKNDIIRSTEVEKSRREWEIDPSKLIIKSVIARGTFGTVHRGIYDGQDVAVKLLDWGEEGHRSDAEIASLRAAFTQEVAVWHKLDHPNVTKFIGAAMGTSEMSIQTENGQMGMPSNVCCVVVEYCPGGALKSFLIKTRRRKLAFKVVIQLSLDLARGLSYLHSQKIVHRDVKTENMLLDKSRTLKIADFGVARLEASNPNDMTGETGTLGYMAPEVLNGSPYNRKCDVYSFGICLWEIYCCDMPYPDLSFSEVTSAVVRQNLRPEIPRCCPSSLANVMKRCWDANPEKRPEMEEVVAMLEAIDTSKGGGMIPPDQQQGCFCFRRHRGP.

Phosphoserine; by PHOT1 occurs at positions 43 and 45. Residues 108–385 (LIIKSVIARG…EEVVAMLEAI (278 aa)) form the Protein kinase domain. ATP is bound by residues 114 to 122 (IARGTFGTV) and K135. Catalysis depends on D253, which acts as the Proton acceptor. Residue T286 is modified to Phosphothreonine.

Belongs to the protein kinase superfamily. Ser/Thr protein kinase family. In terms of assembly, binds to CBC2. Associates with PHOT2, BLUS1 and PM H(+)-ATPase (e.g. AHA1). Autophosphorylated. Phosphorylated in guard cells by HT1 in response to low CO(2) concentrations and by PHOT1 after blue light (BL) exposure. Expressed in guard cells.

The protein localises to the cytoplasm. Its subcellular location is the cytosol. It carries out the reaction L-seryl-[protein] + ATP = O-phospho-L-seryl-[protein] + ADP + H(+). The catalysed reaction is L-threonyl-[protein] + ATP = O-phospho-L-threonyl-[protein] + ADP + H(+). In terms of biological role, serine/threonine protein kinase that phosphorylates proteins on serine and threonine residues. Collectively with CBC2, acts as a negative regulator of stomatal opening, probably via the inhibition of plasma membrane-type ATPases (AHA1 and AHA2) activity in guard cells, but in an abscisic acid (ABA)-independent manner. However, at low concentrations of CO(2), together with CBC2, stimulates stomatal opening via the inhibition of S-type anion channels in response to blue light (BL) and red light (RL), thus being a key component to maximize photosynthesis in the light under low CO(2) conditions. Required for temperature decrease in leaves. Downstream target of HIGH LEAF TEMPERATURE1 (HT1) during low CO(2)-induced stomatal opening. Also functions in the signaling pathways of phototropins. In Arabidopsis thaliana (Mouse-ear cress), this protein is Serine/threonine-protein kinase 54.